The primary structure comprises 358 residues: tRNA-specific 2-thiouridylase MnmA (358 aa).

ATP-binding positions include Gly8–Ser15 and Leu34. Cys95 functions as the Nucleophile in the catalytic mechanism. An intrachain disulfide couples Cys95 to Cys194. An ATP-binding site is contributed by Gly120. An interaction with tRNA region spans residues Lys144–Gln146. Catalysis depends on Cys194, which acts as the Cysteine persulfide intermediate. Positions Arg299–Tyr300 are interaction with tRNA.

This sequence belongs to the MnmA/TRMU family.

Its subcellular location is the cytoplasm. The catalysed reaction is S-sulfanyl-L-cysteinyl-[protein] + uridine(34) in tRNA + AH2 + ATP = 2-thiouridine(34) in tRNA + L-cysteinyl-[protein] + A + AMP + diphosphate + H(+). Its function is as follows. Catalyzes the 2-thiolation of uridine at the wobble position (U34) of tRNA, leading to the formation of s(2)U34. This is tRNA-specific 2-thiouridylase MnmA from Synechocystis sp. (strain ATCC 27184 / PCC 6803 / Kazusa).